Consider the following 1178-residue polypeptide: DNA-directed RNA polymerase subunit beta (1178 aa).

The protein belongs to the RNA polymerase beta chain family. As to quaternary structure, the RNAP catalytic core consists of 2 alpha, 1 beta, 1 beta' and 1 omega subunit. When a sigma factor is associated with the core the holoenzyme is formed, which can initiate transcription.

It catalyses the reaction RNA(n) + a ribonucleoside 5'-triphosphate = RNA(n+1) + diphosphate. Its function is as follows. DNA-dependent RNA polymerase catalyzes the transcription of DNA into RNA using the four ribonucleoside triphosphates as substrates. This chain is DNA-directed RNA polymerase subunit beta, found in Treponema pallidum (strain Nichols).